The chain runs to 382 residues: Ustilagic acid biosynthesis cluster protein orf2 (382 aa).

Residues 1–20 (MLQEAKVSTHTSNPLSQSVP) show a composition bias toward polar residues. Positions 1–22 (MLQEAKVSTHTSNPLSQSVPQY) are disordered.

It functions in the pathway secondary metabolite biosynthesis. Part of the gene cluster that mediates the biosynthesis of the glycolipid biosurfactant ustilagic acid (UA). UA is a secreted cellobiose glycolipid that is toxic for many microorganisms and confers biocontrol activity to U.maydis. UA consists of 15,16-dihydroxypalmitic or 2,15,16-trihydroxypalmitic acid, which is O-glycosidically linked to cellobiose at its terminal hydroxyl group. In addition, the cellobiose moiety is acetylated and acylated with a short-chain hydroxy fatty acid. UA biosynthesis starts with omega-hydroxylation of palmitic acid catalyzed by the cytochrome P450 monooxygenase cyp1. Terminal hydroxylation of palmitic acid precedes subterminal hydroxylation catalyzed by the cytochrome P450 monooxygenase cyp2. Sequential glucosylation of the hydroxy fatty acid is probably catalyzed by the glycosyltransferase ugt1. The cellobiose lipid is further decorated by acetylation of the proximal glucose residue and by acylation with a short-chain beta-hydroxy fatty acid at the distal glucose residue. The acyltransferase uat1 may be a good candidate for catalyzing either acetylation or acylation of the cellobiose lipid. The fatty acid synthase fas2 may be involved in synthesis of the carbon backbone of the short-chain beta-hydroxy fatty acid esterified to the cellobiose disaccharide. The secreted UA consists of a mixture of both alpha-hydroxylated and non-hydroxylated glycolipids; therefore, alpha-hydroxylation of the long-chain fatty, catalyzed by the fatty acid hydroxylase ahd1, occurs late in UA biosynthesis and may be the last step before secretion. In Mycosarcoma maydis (Corn smut fungus), this protein is Ustilagic acid biosynthesis cluster protein orf2.